A 767-amino-acid polypeptide reads, in one-letter code: Polyribonucleotide nucleotidyltransferase (767 aa).

Positions 488 and 494 each coordinate Mg(2+). In terms of domain architecture, KH spans 555–614 (PRLYTMKINPEKIRDVIGKGGSVIRALTEETGCQIDIGEDGTITIASTDADKAELAKKRI). Residues 624-692 (GKVYEGPVVK…EKGRIKLSMK (69 aa)) form the S1 motif domain. Residues 700–742 (GMEFEERAPRREGGFGDRGDRGDRGPRRDRGGDRPERGERPAR) show a composition bias toward basic and acidic residues. The interval 700–767 (GMEFEERAPR…QPQQQQGQQQ (68 aa)) is disordered. Low complexity predominate over residues 752–767 (GAPAAGQPQQQQGQQQ).

This sequence belongs to the polyribonucleotide nucleotidyltransferase family. Requires Mg(2+) as cofactor.

The protein resides in the cytoplasm. It catalyses the reaction RNA(n+1) + phosphate = RNA(n) + a ribonucleoside 5'-diphosphate. Involved in mRNA degradation. Catalyzes the phosphorolysis of single-stranded polyribonucleotides processively in the 3'- to 5'-direction. This chain is Polyribonucleotide nucleotidyltransferase, found in Leptothrix cholodnii (strain ATCC 51168 / LMG 8142 / SP-6) (Leptothrix discophora (strain SP-6)).